We begin with the raw amino-acid sequence, 423 residues long: D-tagatose-1,6-bisphosphate aldolase subunit GatZ (423 aa).

Belongs to the GatZ/KbaZ family. GatZ subfamily. As to quaternary structure, forms a complex with GatY.

It participates in carbohydrate metabolism; D-tagatose 6-phosphate degradation; D-glyceraldehyde 3-phosphate and glycerone phosphate from D-tagatose 6-phosphate: step 2/2. Its function is as follows. Component of the tagatose-1,6-bisphosphate aldolase GatYZ that is required for full activity and stability of the Y subunit. Could have a chaperone-like function for the proper and stable folding of GatY. When expressed alone, GatZ does not show any aldolase activity. Is involved in the catabolism of galactitol. This chain is D-tagatose-1,6-bisphosphate aldolase subunit GatZ, found in Salmonella enteritidis PT4 (strain P125109).